The chain runs to 369 residues: Saccharopine dehydrogenase [NAD(+), L-lysine-forming] (369 aa).

Positions 19 and 78 each coordinate L-saccharopine. The active-site Proton acceptor is the Lys-78. His-96 (proton donor) is an active-site residue. Gln-101 serves as a coordination point for L-saccharopine. Position 130 (Arg-130) interacts with NAD(+). Arg-131 and Phe-135 together coordinate L-saccharopine. NAD(+) is bound by residues 203–204 (GR), Asp-227, Thr-231, Tyr-251, and Val-278. Cysteines 205 and 249 form a disulfide. Residue 279–281 (SAD) participates in L-saccharopine binding. Position 318–321 (318–321 (IDHL)) interacts with NAD(+).

The protein belongs to the AlaDH/PNT family. In terms of assembly, monomer.

It catalyses the reaction L-saccharopine + NAD(+) + H2O = L-lysine + 2-oxoglutarate + NADH + H(+). The protein operates within amino-acid biosynthesis; L-lysine biosynthesis via AAA pathway; L-lysine from L-alpha-aminoadipate (fungal route): step 3/3. Catalyzes the NAD(+)-dependent cleavage of saccharopine to L-lysine and 2-oxoglutarate, the final step in the alpha-aminoadipate (AAA) pathway for lysin biosynthesis. The polypeptide is Saccharopine dehydrogenase [NAD(+), L-lysine-forming] (Yarrowia lipolytica (strain CLIB 122 / E 150) (Yeast)).